A 1201-amino-acid chain; its full sequence is DNA-directed RNA polymerase subunit beta' (1201 aa).

Residues Cys60, Cys62, Cys75, and Cys78 each coordinate Zn(2+). Mg(2+) is bound by residues Asp449, Asp451, and Asp453. Residues Cys818, Cys892, Cys899, and Cys902 each contribute to the Zn(2+) site.

It belongs to the RNA polymerase beta' chain family. The RNAP catalytic core consists of 2 alpha, 1 beta, 1 beta' and 1 omega subunit. When a sigma factor is associated with the core the holoenzyme is formed, which can initiate transcription. Mg(2+) is required as a cofactor. It depends on Zn(2+) as a cofactor.

The catalysed reaction is RNA(n) + a ribonucleoside 5'-triphosphate = RNA(n+1) + diphosphate. In terms of biological role, DNA-dependent RNA polymerase catalyzes the transcription of DNA into RNA using the four ribonucleoside triphosphates as substrates. In Listeria innocua serovar 6a (strain ATCC BAA-680 / CLIP 11262), this protein is DNA-directed RNA polymerase subunit beta'.